The primary structure comprises 328 residues: Olfactory receptor 4A16 (328 aa).

At 1-23 the chain is on the extracellular side; sequence MRPSSNVTEFVLLGLTQDPDVKK. N6 carries N-linked (GlcNAc...) asparagine glycosylation. The chain crosses the membrane as a helical span at residues 24 to 47; sequence TLFVMFLLIYIVTMVGNLLIWVTT. At 48–55 the chain is on the cytoplasmic side; it reads IGSPSLGS. A helical transmembrane segment spans residues 56–77; it reads LMYFFLAYLSLMDAIYSTAMSP. Residues 78 to 98 are Extracellular-facing; sequence KLMIDLLCDKIAISLSACMGQ. An intrachain disulfide couples C95 to C187. The chain crosses the membrane as a helical span at residues 99-118; sequence LFIEHLLGGAEVFLLVVMAY. Topologically, residues 119–137 are cytoplasmic; it reads DRYVAISKPLHYLNIMNRL. A helical transmembrane segment spans residues 138–156; it reads VCILLLVVAMIGGFVHSVV. The Extracellular portion of the chain corresponds to 157–193; that stretch reads QIVFLYSLPICGPNVIDHSVCDMYPLLELLCLDTYFI. The helical transmembrane segment at 194-217 threads the bilayer; it reads GLTVVANGGIICMVIFTFLLISCG. At 218–233 the chain is on the cytoplasmic side; sequence VILNFLKTYSQEERHK. The chain crosses the membrane as a helical span at residues 234 to 256; that stretch reads ALPTCISHIIVVALVFVPCIFMY. Topologically, residues 257–267 are extracellular; the sequence is VRPVSNFPFDK. A helical membrane pass occupies residues 268 to 287; sequence LMTVFYSIITLMLNPLIYSL. The Cytoplasmic portion of the chain corresponds to 288–328; sequence RQSEMKNAMKNLWCEKLSIVRKRVSPTLNIFIPSSKATNRR.

It belongs to the G-protein coupled receptor 1 family.

The protein localises to the cell membrane. In terms of biological role, odorant receptor. This chain is Olfactory receptor 4A16 (OR4A16), found in Homo sapiens (Human).